A 109-amino-acid chain; its full sequence is Cell division protein ZapA (109 aa).

Residues 21–97 (PEQQEALNQA…QTIEQALVEQ (77 aa)) adopt a coiled-coil conformation.

It belongs to the ZapA family. Type 1 subfamily. Homodimer. Interacts with FtsZ.

The protein localises to the cytoplasm. In terms of biological role, activator of cell division through the inhibition of FtsZ GTPase activity, therefore promoting FtsZ assembly into bundles of protofilaments necessary for the formation of the division Z ring. It is recruited early at mid-cell but it is not essential for cell division. The polypeptide is Cell division protein ZapA (Sodalis glossinidius (strain morsitans)).